We begin with the raw amino-acid sequence, 156 residues long: Endoribonuclease YbeY (156 aa).

His-122, His-126, and His-132 together coordinate Zn(2+).

This sequence belongs to the endoribonuclease YbeY family. Zn(2+) serves as cofactor.

The protein localises to the cytoplasm. Its function is as follows. Single strand-specific metallo-endoribonuclease involved in late-stage 70S ribosome quality control and in maturation of the 3' terminus of the 16S rRNA. In Bacillus cytotoxicus (strain DSM 22905 / CIP 110041 / 391-98 / NVH 391-98), this protein is Endoribonuclease YbeY.